A 306-amino-acid polypeptide reads, in one-letter code: Methylated RNA-binding protein 1 (306 aa).

The YTH domain occupies 155–290 (SRFFVIKSSS…SIGISIINLF (136 aa)). Residues 161–163 (KSS), asparagine 207, and tryptophan 231 contribute to the RNA site.

Its function is as follows. RNA-binding protein that acts as a post-transcriptional regulator of phosphate metabolism by binding to the 3'-UTR region of PHO4 mRNA, decreasing its stability. Acts by recognizing and binding N6-methyladenosine (m6A)-containing RNAs, a modification present at internal sites of mRNAs and some non-coding RNAs. The polypeptide is Methylated RNA-binding protein 1 (Saccharomyces cerevisiae (strain ATCC 204508 / S288c) (Baker's yeast)).